The chain runs to 241 residues: Orotidine 5'-phosphate decarboxylase (241 aa).

Substrate is bound by residues Asp19, Lys41, 69 to 78, Thr124, Arg185, Gln194, Gly214, and Arg215; that span reads DLKFFDIPAT. Lys71 (proton donor) is an active-site residue.

Belongs to the OMP decarboxylase family. Type 1 subfamily. As to quaternary structure, homodimer.

It catalyses the reaction orotidine 5'-phosphate + H(+) = UMP + CO2. The protein operates within pyrimidine metabolism; UMP biosynthesis via de novo pathway; UMP from orotate: step 2/2. Functionally, catalyzes the decarboxylation of orotidine 5'-monophosphate (OMP) to uridine 5'-monophosphate (UMP). This is Orotidine 5'-phosphate decarboxylase from Stenotrophomonas maltophilia (strain K279a).